Here is a 536-residue protein sequence, read N- to C-terminus: CUGBP Elav-like family member 2 (536 aa).

RRM domains lie at 58-141 (IKMF…PADS), 150-230 (RKLF…FADT), and 451-529 (ANLF…LKRS).

The protein belongs to the CELF/BRUNOL family.

It is found in the nucleus. The protein localises to the cytoplasm. Functionally, RNA-binding protein implicated in the regulation of several post-transcriptional events. May be involved in pre-mRNA alternative splicing, mRNA translation repression and stability. The protein is CUGBP Elav-like family member 2 (celf2) of Xenopus laevis (African clawed frog).